The chain runs to 470 residues: PTS system trehalose-specific EIIBC component (470 aa).

The PTS EIIB type-1 domain occupies 1–88 (MGELNKSARQ…VKETGIGEST (88 aa)). Cysteine 27 serves as the catalytic Phosphocysteine intermediate; for EIIB activity. A Phosphocysteine; by EIIA modification is found at cysteine 27. Positions 108–470 (KTLADIFIPI…TYAYARFKHK (363 aa)) constitute a PTS EIIC type-1 domain. 10 helical membrane-spanning segments follow: residues 110 to 130 (LADI…LMGI), 160 to 180 (INLI…WSAV), 183 to 203 (FGGN…PDLL), 234 to 254 (GQVL…VFLT), 263 to 283 (LLVV…IIIG), 301 to 321 (FGSF…ALVI), 326 to 346 (HTFL…TFLW), 347 to 367 (PMLA…MFIV), 403 to 423 (FIIA…QGVL), and 443 to 463 (WGAF…GTYA).

It localises to the cell membrane. The catalysed reaction is alpha,alpha-trehalose(out) + N(pros)-phospho-L-histidyl-[protein] = alpha,alpha-trehalose 6-phosphate(in) + L-histidyl-[protein]. Functionally, the phosphoenolpyruvate-dependent sugar phosphotransferase system (sugar PTS), a major carbohydrate active transport system, catalyzes the phosphorylation of incoming sugar substrates concomitantly with their translocation across the cell membrane. This system is involved in trehalose transport. This Bacillus subtilis (strain 168) protein is PTS system trehalose-specific EIIBC component (treP).